The sequence spans 152 residues: Deoxyuridine 5'-triphosphate nucleotidohydrolase (152 aa).

Residues 72-74, N85, and 89-91 contribute to the substrate site; these read RSG and TID.

The protein belongs to the dUTPase family. Mg(2+) serves as cofactor.

It catalyses the reaction dUTP + H2O = dUMP + diphosphate + H(+). It participates in pyrimidine metabolism; dUMP biosynthesis; dUMP from dCTP (dUTP route): step 2/2. This enzyme is involved in nucleotide metabolism: it produces dUMP, the immediate precursor of thymidine nucleotides and it decreases the intracellular concentration of dUTP so that uracil cannot be incorporated into DNA. The protein is Deoxyuridine 5'-triphosphate nucleotidohydrolase of Rhodopseudomonas palustris (strain BisB5).